Reading from the N-terminus, the 263-residue chain is Acyl-[acyl-carrier-protein]--UDP-N-acetylglucosamine O-acyltransferase (263 aa).

It belongs to the transferase hexapeptide repeat family. LpxA subfamily. Homotrimer.

It is found in the cytoplasm. The catalysed reaction is a (3R)-hydroxyacyl-[ACP] + UDP-N-acetyl-alpha-D-glucosamine = a UDP-3-O-[(3R)-3-hydroxyacyl]-N-acetyl-alpha-D-glucosamine + holo-[ACP]. It participates in glycolipid biosynthesis; lipid IV(A) biosynthesis; lipid IV(A) from (3R)-3-hydroxytetradecanoyl-[acyl-carrier-protein] and UDP-N-acetyl-alpha-D-glucosamine: step 1/6. Its function is as follows. Involved in the biosynthesis of lipid A, a phosphorylated glycolipid that anchors the lipopolysaccharide to the outer membrane of the cell. The polypeptide is Acyl-[acyl-carrier-protein]--UDP-N-acetylglucosamine O-acyltransferase (Tolumonas auensis (strain DSM 9187 / NBRC 110442 / TA 4)).